Reading from the N-terminus, the 272-residue chain is Lyso-glycine lipid O-acyltransferase (272 aa).

Belongs to the O-acyltransferase GlsA family.

It catalyses the reaction a lyso-glycine lipid + a fatty acyl-[ACP] = a glycine lipid + holo-[ACP]. It carries out the reaction N-[(3R)-3-hydroxyhexadecanoyl]-glycine + hexadecanoyl-[ACP] = N-[(3R)-3-(hexadecanoyloxy)hexadecanoyl]-glycine + holo-[ACP]. It functions in the pathway lipid metabolism. Functionally, is involved in the production of glycine lipids (GL), which are phosphorus-free membrane lipids important for fitness during growth of the human gut bacterium B.thetaiotaomicron in vivo and in vitro. Catalyzes the second step of GL biosynthesis, i.e. the O-acylation of the hydroxyl group of lyso-glycine lipids, resulting in the production of the mature diacylated glycine lipids. The protein is Lyso-glycine lipid O-acyltransferase of Bacteroides thetaiotaomicron (strain ATCC 29148 / DSM 2079 / JCM 5827 / CCUG 10774 / NCTC 10582 / VPI-5482 / E50).